Here is a 156-residue protein sequence, read N- to C-terminus: 16 kDa phloem protein 1 (156 aa).

The C2 domain maps to 1–108; sequence MAVGILEVSL…LEMGVEKGTA (108 aa). Residues Asp-20, Asp-26, Asp-78, Asp-80, Ser-83, and Asp-86 each coordinate Ca(2+).

Ca(2+) is required as a cofactor.

In terms of biological role, binds to both sense and antisense RNA. Can also bind sheared DNA and dodecamer DNA with a low affinity. Interacts with mesophyll plasmodesmata to mediate its own cell-to-cell transport and potentiate RNA trafficking. May play a role in plant defense signaling. The sequence is that of 16 kDa phloem protein 1 from Arabidopsis thaliana (Mouse-ear cress).